The chain runs to 520 residues: Beta-glucosidase 45 (520 aa).

An N-terminal signal peptide occupies residues 1 to 22 (MKNLTSFVIVILLQSLLFHVYG). A glycan (N-linked (GlcNAc...) asparagine) is linked at Asn3. A beta-D-glucoside-binding positions include Gln52, His155, and 200 to 201 (NE). Glu201 acts as the Proton donor in catalysis. Cys220 and Cys227 are oxidised to a cystine. Asn226 carries an N-linked (GlcNAc...) asparagine glycan. Tyr344 provides a ligand contact to a beta-D-glucoside. Cys352 and Cys357 form a disulfide bridge. The N-linked (GlcNAc...) asparagine glycan is linked to Asn378. Glu417 serves as a coordination point for a beta-D-glucoside. Glu417 acts as the Nucleophile in catalysis. Residue Asn435 is glycosylated (N-linked (GlcNAc...) asparagine). A beta-D-glucoside-binding positions include Trp466, 473–474 (EW), and Phe482.

Belongs to the glycosyl hydrolase 1 family. Expressed in stems and siliques.

The enzyme catalyses Hydrolysis of terminal, non-reducing beta-D-glucosyl residues with release of beta-D-glucose.. In terms of biological role, hydrolyzes p-nitrophenyl beta-D-glucoside and natural glucosides such as syringin, coniferin and p-coumaryl alcohol glucoside. May be involved in lignification by hydrolyzing monolignol glucosides. The sequence is that of Beta-glucosidase 45 from Arabidopsis thaliana (Mouse-ear cress).